The sequence spans 49 residues: Defensin Tm-AMP-D1.2 (49 aa).

Intrachain disulfides connect C3-C49, C14-C34, C20-C43, and C24-C45.

Plant defense peptide. In Triticum monococcum (Einkorn wheat), this protein is Defensin Tm-AMP-D1.2.